Here is a 288-residue protein sequence, read N- to C-terminus: Cell division protein DivIB (288 aa).

The Cytoplasmic segment spans residues 1-25; that stretch reads MEKVIDITERVPAMKKRRRRRTNFK. A helical membrane pass occupies residues 26–46; sequence FLALVTIFLFIIIILLYFQLP. Residues 47–288 lie on the Extracellular side of the membrane; sequence YSDIKKIDIK…LEEQNEEEPE (242 aa). The region spanning 48–116 is the POTRA domain; the sequence is SDIKKIDIKG…NEVQITVEEW (69 aa). The segment covering 253 to 263 has biased composition (basic and acidic residues); that stretch reads LIKENTEKTEE. Positions 253–288 are disordered; sequence LIKENTEKTEEPAEETENADTEEGGQLEEQNEEEPE. Residues 264–288 show a composition bias toward acidic residues; the sequence is PAEETENADTEEGGQLEEQNEEEPE.

The protein belongs to the FtsQ/DivIB family. DivIB subfamily.

The protein resides in the cell membrane. In terms of biological role, cell division protein that may be involved in stabilizing or promoting the assembly of the division complex. This is Cell division protein DivIB from Solibacillus silvestris (strain StLB046) (Bacillus silvestris).